The following is a 460-amino-acid chain: Serine--tRNA ligase (460 aa).

Residue 242 to 244 (TAE) participates in L-serine binding. ATP-binding positions include 273 to 275 (RRE) and valine 289. Glutamate 296 contributes to the L-serine binding site. An ATP-binding site is contributed by 369 to 372 (EVSS). Residue serine 405 coordinates L-serine.

The protein belongs to the class-II aminoacyl-tRNA synthetase family. Type-1 seryl-tRNA synthetase subfamily. Homodimer. The tRNA molecule binds across the dimer.

The protein localises to the cytoplasm. The catalysed reaction is tRNA(Ser) + L-serine + ATP = L-seryl-tRNA(Ser) + AMP + diphosphate + H(+). It catalyses the reaction tRNA(Sec) + L-serine + ATP = L-seryl-tRNA(Sec) + AMP + diphosphate + H(+). It functions in the pathway aminoacyl-tRNA biosynthesis; selenocysteinyl-tRNA(Sec) biosynthesis; L-seryl-tRNA(Sec) from L-serine and tRNA(Sec): step 1/1. Its function is as follows. Catalyzes the attachment of serine to tRNA(Ser). Is also able to aminoacylate tRNA(Sec) with serine, to form the misacylated tRNA L-seryl-tRNA(Sec), which will be further converted into selenocysteinyl-tRNA(Sec). The protein is Serine--tRNA ligase of Haloquadratum walsbyi (strain DSM 16790 / HBSQ001).